We begin with the raw amino-acid sequence, 119 residues long: FAD-linked sulfhydryl oxidase (119 aa).

One can recognise an ERV/ALR sulfhydryl oxidase domain in the interval 1–97 (MLHWGPKYWR…ISWSEYKNIY (97 aa)). Residues Cys-44 and Cys-47 are joined by a disulfide bond.

The protein belongs to the asfivirus B119L family. Interacts with A151R. Requires FAD as cofactor.

It is found in the host cytoplasm. It localises to the virion. The enzyme catalyses 2 R'C(R)SH + O2 = R'C(R)S-S(R)CR' + H2O2. Functionally, FAD-dependent sulfhydryl oxidase that catalyzes the formation of disulfide bonds in viral proteins produced in the cell cytoplasm. Involved in virion maturation. The chain is FAD-linked sulfhydryl oxidase from African swine fever virus (isolate Warthog/Namibia/Wart80/1980) (ASFV).